A 144-amino-acid polypeptide reads, in one-letter code: Large ribosomal subunit protein uL15 (144 aa).

Positions 1–60 (MRLNSLRPAAGSRPDANRVGRGAGTGNGKTAGRGHKGQHSRSGGFTKVGFEGGQMPLQRR) are disordered. Over residues 21 to 31 (RGAGTGNGKTA) the composition is skewed to gly residues.

It belongs to the universal ribosomal protein uL15 family. As to quaternary structure, part of the 50S ribosomal subunit.

Functionally, binds to the 23S rRNA. The sequence is that of Large ribosomal subunit protein uL15 from Alkalilimnicola ehrlichii (strain ATCC BAA-1101 / DSM 17681 / MLHE-1).